The chain runs to 388 residues: MNIHEYQGKEILRKYGVTTPKGFPCFSVDEAVQAAEKLGGKVWVVKAQIHAGGRGKGGGVKVAKSLDEVRKYANDILGMTLVTHQTGPEGRLVKRLLIEEGADIKKELYVGMVVDRGSQRVALMASSEGGMDIEHVAEHTPEKIHKVFIDPVKGLLDSEADDIARKIGVPEGSIGQARAFMQGLYKAFDETDASLAEINPLIVTGDDRIVALDAKFNFDSNAMYRHPEIQEMRDLDEEDPAEIEASKFDLTYISLDGNIGCLVNGAGLAMATMDVIKLYGGSPANFLDVGGGATTEKVTEAFKIMLKNPDIKAILVNIFGGIMKCDVIAQGVIAAAKQVDLTVPLVVRMAGTNEELGKKILAESGLPIITANNMAEAAEKVVNAAQGK.

The 236-residue stretch at lysine 9 to glutamate 244 folds into the ATP-grasp domain. ATP contacts are provided by residues lysine 46, glycine 53–glycine 55, glutamate 99, alanine 102, and glutamate 107. Positions 199 and 213 each coordinate Mg(2+). Substrate is bound by residues asparagine 264 and glycine 321–methionine 323.

This sequence belongs to the succinate/malate CoA ligase beta subunit family. Heterotetramer of two alpha and two beta subunits. Requires Mg(2+) as cofactor.

The catalysed reaction is succinate + ATP + CoA = succinyl-CoA + ADP + phosphate. The enzyme catalyses GTP + succinate + CoA = succinyl-CoA + GDP + phosphate. It participates in carbohydrate metabolism; tricarboxylic acid cycle; succinate from succinyl-CoA (ligase route): step 1/1. Succinyl-CoA synthetase functions in the citric acid cycle (TCA), coupling the hydrolysis of succinyl-CoA to the synthesis of either ATP or GTP and thus represents the only step of substrate-level phosphorylation in the TCA. The beta subunit provides nucleotide specificity of the enzyme and binds the substrate succinate, while the binding sites for coenzyme A and phosphate are found in the alpha subunit. The protein is Succinate--CoA ligase [ADP-forming] subunit beta of Janthinobacterium sp. (strain Marseille) (Minibacterium massiliensis).